The chain runs to 384 residues: Dual-specificity RNA methyltransferase RlmN (384 aa).

The active-site Proton acceptor is Glu-105. The Radical SAM core domain maps to 111–350 (EDDRATLCVS…TIVRKTRGDD (240 aa)). A disulfide bond links Cys-118 and Cys-355. [4Fe-4S] cluster contacts are provided by Cys-125, Cys-129, and Cys-132. S-adenosyl-L-methionine contacts are provided by residues 179-180 (GE), Ser-211, 233-235 (SLH), and Asn-312. Cys-355 functions as the S-methylcysteine intermediate in the catalytic mechanism.

Belongs to the radical SAM superfamily. RlmN family. [4Fe-4S] cluster serves as cofactor.

The protein resides in the cytoplasm. It catalyses the reaction adenosine(2503) in 23S rRNA + 2 reduced [2Fe-2S]-[ferredoxin] + 2 S-adenosyl-L-methionine = 2-methyladenosine(2503) in 23S rRNA + 5'-deoxyadenosine + L-methionine + 2 oxidized [2Fe-2S]-[ferredoxin] + S-adenosyl-L-homocysteine. The enzyme catalyses adenosine(37) in tRNA + 2 reduced [2Fe-2S]-[ferredoxin] + 2 S-adenosyl-L-methionine = 2-methyladenosine(37) in tRNA + 5'-deoxyadenosine + L-methionine + 2 oxidized [2Fe-2S]-[ferredoxin] + S-adenosyl-L-homocysteine. Functionally, specifically methylates position 2 of adenine 2503 in 23S rRNA and position 2 of adenine 37 in tRNAs. m2A2503 modification seems to play a crucial role in the proofreading step occurring at the peptidyl transferase center and thus would serve to optimize ribosomal fidelity. The chain is Dual-specificity RNA methyltransferase RlmN from Shigella flexneri serotype 5b (strain 8401).